The primary structure comprises 458 residues: MSSGRIVQIIGAVIDVEFPRDSVPSIYDALKVQGAETTLEVQQQLGDGVVRTIAMGSTEGLKRGLDVNNTGAAISVPVGKATLGRIMDVLGNPIDEAGPIGEEERWGIHRAAPSFAEQAGGNELLETGIKVIDLVCPFAKGGKVGLFGGAGVGKTVNMMELIRNIAIEHSGYSVFAGVGERTREGNDFYHEMKDSNVLDKVALVYGQMNEPPGNRLRVALTGLTMAEKFRDEGNDVLLFVDNIYRYTLAGTEVSALLGRMPSAVGYQPTLAEEMGVLQERITSTKQGSITSIQAVYVPADDLTDPSPATTFAHLDATVVLSRDIASLGIYPAVDPLDSTSRQLDPNVIGNDHYETARGVQYVLQRYKELKDIIAILGMDELSEADKQLVNRARKIQRFLSQPFFVAEVFTGASGKYVSLKDTIAGFKGILNGDYDHLPEQAFYMVGGIEEAIEKAKKL.

148 to 155 (GGAGVGKT) is a binding site for ATP.

Belongs to the ATPase alpha/beta chains family. As to quaternary structure, F-type ATPases have 2 components, CF(1) - the catalytic core - and CF(0) - the membrane proton channel. CF(1) has five subunits: alpha(3), beta(3), gamma(1), delta(1), epsilon(1). CF(0) has three main subunits: a(1), b(2) and c(9-12). The alpha and beta chains form an alternating ring which encloses part of the gamma chain. CF(1) is attached to CF(0) by a central stalk formed by the gamma and epsilon chains, while a peripheral stalk is formed by the delta and b chains.

The protein localises to the cell inner membrane. The enzyme catalyses ATP + H2O + 4 H(+)(in) = ADP + phosphate + 5 H(+)(out). In terms of biological role, produces ATP from ADP in the presence of a proton gradient across the membrane. The catalytic sites are hosted primarily by the beta subunits. The sequence is that of ATP synthase subunit beta from Pseudomonas fluorescens (strain Pf0-1).